The chain runs to 216 residues: U1 small nuclear ribonucleoprotein C (216 aa).

The Matrin-type zinc-finger motif lies at 4–36 (FFCDYCDVYLTHDSMSVRKAHNSGRNHLRNVVD). Disordered stretches follow at residues 70-89 (PQNQ…PGAG) and 125-216 (PGGI…ADKR). Pro residues-rich tracts occupy residues 140 to 149 (PPMPPFPGMP) and 157 to 204 (GVPP…PPFG).

The protein belongs to the U1 small nuclear ribonucleoprotein C family. U1 snRNP is composed of the 7 core Sm proteins B/B', D1, D2, D3, E, F and G that assemble in a heptameric protein ring on the Sm site of the small nuclear RNA to form the core snRNP, and at least 3 U1 snRNP-specific proteins U1-70K, U1-A and U1-C. U1-C interacts with U1 snRNA and the 5' splice-site region of the pre-mRNA.

It is found in the nucleus. Component of the spliceosomal U1 snRNP, which is essential for recognition of the pre-mRNA 5' splice-site and the subsequent assembly of the spliceosome. U1-C is directly involved in initial 5' splice-site recognition for both constitutive and regulated alternative splicing. The interaction with the 5' splice-site seems to precede base-pairing between the pre-mRNA and the U1 snRNA. Stimulates commitment or early (E) complex formation by stabilizing the base pairing of the 5' end of the U1 snRNA and the 5' splice-site region. This is U1 small nuclear ribonucleoprotein C from Neurospora crassa (strain ATCC 24698 / 74-OR23-1A / CBS 708.71 / DSM 1257 / FGSC 987).